The primary structure comprises 137 residues: Immunoglobulin domain-containing protein oig-1 (137 aa).

A signal peptide spans 1–23 (MFSELRILRDILLLCFLSVGINA). The 93-residue stretch at 41–133 (PKISRSSYFK…KGSRVKKFLT (93 aa)) folds into the Ig-like C2-type domain. C63 and C118 form a disulfide bridge.

Expressed in DD and VD GABAergic motor neurons. Expressed in a subset of head neurons including M2 motor neurons in the pharynx. Expressed in coelomocytes.

The protein localises to the membrane. The protein resides in the secreted. Its subcellular location is the extracellular space. It localises to the cell projection. It is found in the dendrite. The protein localises to the axon. Plays a role in neural development, where it temporally regulates synapse formation in the D-type inhibitory GABAergic motor neurons, dorsal D (DD) and ventral D (VD) motor neurons. Controls the translocation of postsynaptic proteins, such as the acetylcholine receptor subunit acr-12, and presynaptic proteins, such as snb-1, along nerve cords to prevent premature synapse remodeling/formation. In Caenorhabditis elegans, this protein is Immunoglobulin domain-containing protein oig-1.